A 1875-amino-acid polypeptide reads, in one-letter code: Nonribosomal peptide synthetase otaB (1875 aa).

Residues 202 to 590 are adenylation 1; it reads GQVRENGDRA…SIRFAGRRQA (389 aa). A Carrier domain is found at 724–800; that stretch reads SPMTAAERVM…DLVAHIKDAG (77 aa). Ser761 is modified (O-(pantetheine 4'-phosphoryl)serine). The interval 836 to 1245 is condensation; it reads EDVYPCTTLQ…LVSPLDEERL (410 aa). The segment at 1264–1659 is adenylation 2; sequence QKQSYAQPQA…ARKDTQVKIR (396 aa).

It belongs to the NRP synthetase family.

It catalyses the reaction 7-carboxymellein + L-phenylalanine + ATP = ochratoxin B + ADP + phosphate + H(+). The protein operates within mycotoxin biosynthesis. In terms of biological role, nonribosomal peptide synthetase; part of the gene cluster that mediates the biosynthesis of ochratoxin A (OTA), a mycotoxin composed of a chlorinated type I polyketide dihydroisocoumarin moiety linked to L-phenylalanine, and demonstrated to have nephrotoxic, immunotoxic, genotoxic, neurotoxic, and teratogenic properties. OtaB is responsible for the linking of phenylalanine to the dihydroisocoumarin ring. The pathway begins with the highly reducing polyketide synthase otaA that catalyzes the formation of the isocoumarin group during the initial stages of biosynthesis, starting from one acetate and 4 malonate units, to originate the characteristic pentaketide skeleton 7-methylmellein (7-MM) of the OTA molecule. The newly identified cyclase otaY might be involved in the polyketide cyclization reaction during the initial steps of the OTA biosynthesis. 7-MM is then oxidized into 7-carboxymellein (also called ochratoxin beta) by the cytochrome P450 monooxygenase otaC. The NRPS encoded by the otaB gene is involved in the linking of phenylalanine to the dihydroisocoumarin ring. The reaction catalyzed by NRPS results in the production of ochratoxin B (OTB), which is the non-chlorinated analog of OTA and which subsequently serves as the substrate of the halogenase otaD for chlorination activity to form the final molecular structure of OTA, containing a chlorine atom in the C-5 position of the molecule. This Aspergillus carbonarius (strain ITEM 5010) protein is Nonribosomal peptide synthetase otaB.